Here is a 299-residue protein sequence, read N- to C-terminus: Peroxisomal biogenesis factor 19 (299 aa).

The disordered stretch occupies residues 1–63; the sequence is MAAAEEGCSV…SPGDTAKDAL (63 aa). An N-acetylalanine modification is found at A2. The interval 2 to 56 is docking to the peroxisome membrane and binding to PEX3; that stretch reads AAAEEGCSVGAEADRELEELLESALDDFDKAKPSPAPPSTTTAPDASGPQKRSPG. Positions 2 to 91 are necessary for PEX19 function on peroxisome biogenesis; the sequence is AAAEEGCSVG…QATAEFEKAM (90 aa). Residues 16-27 are compositionally biased toward acidic residues; it reads RELEELLESALD. 3 positions are modified to phosphoserine: S35, S54, and S66. T236 is modified (phosphothreonine). C296 bears the Cysteine methyl ester mark. The S-farnesyl cysteine moiety is linked to residue C296. A propeptide spans 297–299 (removed in mature form); it reads LIM.

Belongs to the peroxin-19 family. As to quaternary structure, interacts with a broad range of peroxisomal membrane proteins, including PEX3, PEX10, PEX11A, PEX11B, PEX12, PEX13, PEX14 and PEX16, PXMP2/PMP22, PXMP4/PMP24, SLC25A17/PMP34, ABCD1/ALDP, ABCD2/ALDRP, and ABCD3/PMP70. Also interacts with the tumor suppressor CDKN2A/p19ARF. (Microbial infection) Interacts with human cytomegalovirus protein UL37 isoform vMIA; this interaction inhibits the peroxisomal-dependent antiviral signaling. As to expression, ubiquitously expressed. Isoform 1 is strongly predominant in all tissues except in utero where isoform 2 is the main form.

Its subcellular location is the cytoplasm. The protein localises to the peroxisome membrane. Its function is as follows. Necessary for early peroxisomal biogenesis. Acts both as a cytosolic chaperone and as an import receptor for peroxisomal membrane proteins (PMPs). Binds and stabilizes newly synthesized PMPs in the cytoplasm by interacting with their hydrophobic membrane-spanning domains, and targets them to the peroxisome membrane by binding to the integral membrane protein PEX3. Excludes CDKN2A from the nucleus and prevents its interaction with MDM2, which results in active degradation of TP53. This is Peroxisomal biogenesis factor 19 from Homo sapiens (Human).